Here is a 557-residue protein sequence, read N- to C-terminus: Warthog protein 4 (557 aa).

A signal peptide spans 1-20 (MRFSLLALVLLSSSYKFTYG). The disordered stretch occupies residues 272 to 308 (QETNPQPPPPPGQQGGFVQPQGFQPQGGFQPQGFQPQ). Residues 287-308 (GFVQPQGFQPQGGFQPQGFQPQ) show a composition bias toward low complexity.

It belongs to the hedgehog family. In terms of processing, the C-terminal domain displays an autoproteolysis activity.

The protein localises to the secreted. It localises to the cell surface. The protein resides in the cell membrane. Its subcellular location is the extracellular space. Intercellular signal essential for a variety of patterning events during development. This Caenorhabditis elegans protein is Warthog protein 4 (wrt-4).